A 389-amino-acid polypeptide reads, in one-letter code: Protein CysO (389 aa).

Position 127 is an N6-(pyridoxal phosphate)lysine (Lys127). Pyridoxal 5'-phosphate-binding positions include Asn155, 261 to 265, and Ser341; that span reads GTSGH.

Belongs to the cysteine synthase/cystathionine beta-synthase family. As to quaternary structure, homodimer. It depends on pyridoxal 5'-phosphate as a cofactor.

The catalysed reaction is O-acetyl-L-serine + hydrogen sulfide = L-cysteine + acetate. It catalyses the reaction O-phospho-L-serine + hydrogen sulfide + H(+) = L-cysteine + phosphate. It carries out the reaction L-homocysteine + L-serine = L,L-cystathionine + H2O. Its pathway is amino-acid biosynthesis; L-cysteine biosynthesis; L-cysteine from L-serine: step 2/2. Cysteine synthase that can also catalyze the synthesis of S-sulfo-L-cysteine from thiosulfate and O(3)-acetyl-L-serine, as well as the sulfhydrylation of L-serine by sulfide. This Aeropyrum pernix (strain ATCC 700893 / DSM 11879 / JCM 9820 / NBRC 100138 / K1) protein is Protein CysO (cysO).